The primary structure comprises 189 residues: Interferon alpha-G (189 aa).

The first 23 residues, 1–23, serve as a signal peptide directing secretion; it reads MAPAWSLLLALLLLSCNAICSLG. Cystine bridges form between Cys-24–Cys-122 and Cys-52–Cys-162.

Belongs to the alpha/beta interferon family.

It localises to the secreted. In terms of biological role, produced by macrophages, IFN-alpha have antiviral activities. Interferon stimulates the production of two enzymes: a protein kinase and an oligoadenylate synthetase. This Bos taurus (Bovine) protein is Interferon alpha-G (IFNAG).